A 306-amino-acid chain; its full sequence is Ribosomal protein L11 methyltransferase (306 aa).

S-adenosyl-L-methionine contacts are provided by Thr139, Gly173, Asp195, and Asn242.

This sequence belongs to the methyltransferase superfamily. PrmA family.

The protein localises to the cytoplasm. It carries out the reaction L-lysyl-[protein] + 3 S-adenosyl-L-methionine = N(6),N(6),N(6)-trimethyl-L-lysyl-[protein] + 3 S-adenosyl-L-homocysteine + 3 H(+). Its function is as follows. Methylates ribosomal protein L11. The protein is Ribosomal protein L11 methyltransferase of Nostoc sp. (strain PCC 7120 / SAG 25.82 / UTEX 2576).